The chain runs to 269 residues: uncharacterized protein (269 aa).

Transmembrane regions (helical) follow at residues 65 to 85 (FSLF…LFVM), 156 to 176 (VTSV…ISMV), 182 to 202 (YTRI…WLGF), 206 to 226 (MMSF…NDFW), and 242 to 262 (TLSA…EFSF). The Di-lysine motif motif lies at 266 to 269 (KKKW).

The protein belongs to the SURF4 family.

Its subcellular location is the membrane. This is an uncharacterized protein from Caenorhabditis elegans.